Reading from the N-terminus, the 427-residue chain is Glutamate-1-semialdehyde 2,1-aminomutase (427 aa).

Lys267 bears the N6-(pyridoxal phosphate)lysine mark.

This sequence belongs to the class-III pyridoxal-phosphate-dependent aminotransferase family. HemL subfamily. Homodimer. Pyridoxal 5'-phosphate is required as a cofactor.

It is found in the cytoplasm. The catalysed reaction is (S)-4-amino-5-oxopentanoate = 5-aminolevulinate. Its pathway is porphyrin-containing compound metabolism; protoporphyrin-IX biosynthesis; 5-aminolevulinate from L-glutamyl-tRNA(Glu): step 2/2. In Syntrophotalea carbinolica (strain DSM 2380 / NBRC 103641 / GraBd1) (Pelobacter carbinolicus), this protein is Glutamate-1-semialdehyde 2,1-aminomutase.